A 704-amino-acid chain; its full sequence is Ribosomal RNA large subunit methyltransferase K/L (704 aa).

Residues 43 to 154 form the THUMP domain; the sequence is TMYQSLLWSR…KEKASLSLDL (112 aa).

It belongs to the methyltransferase superfamily. RlmKL family.

The protein localises to the cytoplasm. It carries out the reaction guanosine(2445) in 23S rRNA + S-adenosyl-L-methionine = N(2)-methylguanosine(2445) in 23S rRNA + S-adenosyl-L-homocysteine + H(+). The catalysed reaction is guanosine(2069) in 23S rRNA + S-adenosyl-L-methionine = N(2)-methylguanosine(2069) in 23S rRNA + S-adenosyl-L-homocysteine + H(+). In terms of biological role, specifically methylates the guanine in position 2445 (m2G2445) and the guanine in position 2069 (m7G2069) of 23S rRNA. In Proteus mirabilis (strain HI4320), this protein is Ribosomal RNA large subunit methyltransferase K/L.